Reading from the N-terminus, the 362-residue chain is Histidinol-phosphate aminotransferase 1 (362 aa).

Lysine 226 is subject to N6-(pyridoxal phosphate)lysine.

Belongs to the class-II pyridoxal-phosphate-dependent aminotransferase family. Histidinol-phosphate aminotransferase subfamily. Homodimer. Requires pyridoxal 5'-phosphate as cofactor.

The enzyme catalyses L-histidinol phosphate + 2-oxoglutarate = 3-(imidazol-4-yl)-2-oxopropyl phosphate + L-glutamate. Its pathway is amino-acid biosynthesis; L-histidine biosynthesis; L-histidine from 5-phospho-alpha-D-ribose 1-diphosphate: step 7/9. The polypeptide is Histidinol-phosphate aminotransferase 1 (Dechloromonas aromatica (strain RCB)).